The chain runs to 208 residues: UPF0637 protein BCAH820_3975 (208 aa).

Belongs to the UPF0637 family.

The sequence is that of UPF0637 protein BCAH820_3975 from Bacillus cereus (strain AH820).